The chain runs to 341 residues: Anthranilate phosphoribosyltransferase (341 aa).

Residues G83, 86–87 (GD), T91, 93–96 (NIST), 111–119 (KHGNRGVSS), and S123 each bind 5-phospho-alpha-D-ribose 1-diphosphate. G83 lines the anthranilate pocket. Residue S95 participates in Mg(2+) binding. N114 serves as a coordination point for anthranilate. Anthranilate is bound at residue R169. Positions 228 and 229 each coordinate Mg(2+).

It belongs to the anthranilate phosphoribosyltransferase family. As to quaternary structure, homodimer. Mg(2+) serves as cofactor.

It carries out the reaction N-(5-phospho-beta-D-ribosyl)anthranilate + diphosphate = 5-phospho-alpha-D-ribose 1-diphosphate + anthranilate. It participates in amino-acid biosynthesis; L-tryptophan biosynthesis; L-tryptophan from chorismate: step 2/5. Catalyzes the transfer of the phosphoribosyl group of 5-phosphorylribose-1-pyrophosphate (PRPP) to anthranilate to yield N-(5'-phosphoribosyl)-anthranilate (PRA). The polypeptide is Anthranilate phosphoribosyltransferase (Cupriavidus necator (strain ATCC 17699 / DSM 428 / KCTC 22496 / NCIMB 10442 / H16 / Stanier 337) (Ralstonia eutropha)).